A 269-amino-acid polypeptide reads, in one-letter code: Imidazoleglycerol-phosphate dehydratase 1, chloroplastic (269 aa).

Disordered stretches follow at residues 1–31 (MTTA…GSGG) and 54–73 (SGVG…VSSR). The transit peptide at 1–52 (MTTAPFVSPSLPRLHSARASPFPKPSVGSGGGVAFPARTYGSSLRLRSAVMS) directs the protein to the chloroplast. Substrate-binding positions include Glu83, 109-117 (HMLDQLASH), 135-139 (HHSNE), Arg161, and Arg183. Positions 109, 135, 136, and 139 each coordinate Mn(2+). Residues His207, His231, His232, and Glu235 each coordinate Mn(2+). Substrate contacts are provided by residues 231–239 (HHIIEATFK) and 261–263 (SSK).

Belongs to the imidazoleglycerol-phosphate dehydratase family. Requires Mn(2+) as cofactor.

It is found in the plastid. It localises to the chloroplast. The enzyme catalyses D-erythro-1-(imidazol-4-yl)glycerol 3-phosphate = 3-(imidazol-4-yl)-2-oxopropyl phosphate + H2O. It participates in amino-acid biosynthesis; L-histidine biosynthesis; L-histidine from 5-phospho-alpha-D-ribose 1-diphosphate: step 6/9. The protein is Imidazoleglycerol-phosphate dehydratase 1, chloroplastic of Triticum aestivum (Wheat).